Reading from the N-terminus, the 484-residue chain is uncharacterized protein (484 aa).

Positions 1–14 (MIDSTSTATATSKT) are enriched in low complexity. The disordered stretch occupies residues 1-32 (MIDSTSTATATSKTVELNTNGSKTDASSENGT). The segment covering 15–32 (VELNTNGSKTDASSENGT) has biased composition (polar residues). Lys305 bears the N6-(pyridoxal phosphate)lysine mark.

The protein belongs to the class-III pyridoxal-phosphate-dependent aminotransferase family. The cofactor is pyridoxal 5'-phosphate.

This is an uncharacterized protein from Schizosaccharomyces pombe (strain 972 / ATCC 24843) (Fission yeast).